A 409-amino-acid chain; its full sequence is Arginine biosynthesis bifunctional protein ArgJ (409 aa).

Substrate is bound by residues threonine 156, lysine 182, threonine 193, glutamate 280, asparagine 404, and serine 409. Threonine 193 serves as the catalytic Nucleophile.

This sequence belongs to the ArgJ family. Heterotetramer of two alpha and two beta chains.

It localises to the cytoplasm. The catalysed reaction is N(2)-acetyl-L-ornithine + L-glutamate = N-acetyl-L-glutamate + L-ornithine. The enzyme catalyses L-glutamate + acetyl-CoA = N-acetyl-L-glutamate + CoA + H(+). It functions in the pathway amino-acid biosynthesis; L-arginine biosynthesis; L-ornithine and N-acetyl-L-glutamate from L-glutamate and N(2)-acetyl-L-ornithine (cyclic): step 1/1. Its pathway is amino-acid biosynthesis; L-arginine biosynthesis; N(2)-acetyl-L-ornithine from L-glutamate: step 1/4. Its function is as follows. Catalyzes two activities which are involved in the cyclic version of arginine biosynthesis: the synthesis of N-acetylglutamate from glutamate and acetyl-CoA as the acetyl donor, and of ornithine by transacetylation between N(2)-acetylornithine and glutamate. This Nitrosomonas europaea (strain ATCC 19718 / CIP 103999 / KCTC 2705 / NBRC 14298) protein is Arginine biosynthesis bifunctional protein ArgJ.